Consider the following 79-residue polypeptide: UPF0154 protein SAK_1616 (79 aa).

Residues 5–25 (IWILLIIVALFGGLVGGIFIA) form a helical membrane-spanning segment.

This sequence belongs to the UPF0154 family.

It is found in the cell membrane. This chain is UPF0154 protein SAK_1616, found in Streptococcus agalactiae serotype Ia (strain ATCC 27591 / A909 / CDC SS700).